The chain runs to 376 residues: MHYAMEQRCLYDYNLSELTELLQSWGEPAFRARQLYRHLYVNLARQVDQMTDLPLALRSRLAEIPFSTLRCEQVQIGDNGMTRKALFRLPDGAVVETVLMVYPDRSTVCVSTQAGCGMGCVFCATGQLGLLRNLSSGEIVAQAIWASQELRAMGMAGPTGRVSNLVFMGMGEPFANYDRWWQAVERLHDPQGFNLGARSMTVSTVGLVKGIERLANERLPINLAISLHAPDDALRSELMPVNRRYPIADLMAATRNYIAKTRRRVSFEYVLLQGKNDHPHQAIALARLLRHSAPRGPLLFHVNLIPWNPVPGTPLGRSEWERVTTFQQILTDYGIPCTVRVERGVEIAAACGQLAGRHSVPLNTVEQEIPARNVTG.

The active-site Proton acceptor is the E96. One can recognise a Radical SAM core domain in the interval 102-346 (YPDRSTVCVS…CTVRVERGVE (245 aa)). A disulfide bond links C109 and C351. 3 residues coordinate [4Fe-4S] cluster: C116, C120, and C123. Residues 171–172 (GE), S203, 226–228 (SLH), and N308 each bind S-adenosyl-L-methionine. Catalysis depends on C351, which acts as the S-methylcysteine intermediate.

Belongs to the radical SAM superfamily. RlmN family. [4Fe-4S] cluster serves as cofactor.

Its subcellular location is the cytoplasm. The enzyme catalyses adenosine(2503) in 23S rRNA + 2 reduced [2Fe-2S]-[ferredoxin] + 2 S-adenosyl-L-methionine = 2-methyladenosine(2503) in 23S rRNA + 5'-deoxyadenosine + L-methionine + 2 oxidized [2Fe-2S]-[ferredoxin] + S-adenosyl-L-homocysteine. The catalysed reaction is adenosine(37) in tRNA + 2 reduced [2Fe-2S]-[ferredoxin] + 2 S-adenosyl-L-methionine = 2-methyladenosine(37) in tRNA + 5'-deoxyadenosine + L-methionine + 2 oxidized [2Fe-2S]-[ferredoxin] + S-adenosyl-L-homocysteine. In terms of biological role, specifically methylates position 2 of adenine 2503 in 23S rRNA and position 2 of adenine 37 in tRNAs. The sequence is that of Probable dual-specificity RNA methyltransferase RlmN from Chloroflexus aurantiacus (strain ATCC 29366 / DSM 635 / J-10-fl).